Here is a 145-residue protein sequence, read N- to C-terminus: MAKSTILVALLALVLVAHASAMRRERGRQGDSSSCERQVDRVNLKPCEQHIMQRIMGEQEQYDSYDIRSTRSSDQQQRCCDELNEMENTQRCMCEALQQIMENQCDRLQDRQMVQQFKRELMNLPQQCNFRAPQRCDLDVSGGRC.

The N-terminal stretch at 1 to 21 (MAKSTILVALLALVLVAHASA) is a signal peptide. 5 disulfides stabilise this stretch: C35–C92, C47–C79, C80–C128, C94–C136, and C105–C145.

The protein belongs to the 2S seed storage albumins family. Expressed in seeds. Not expressed in roots, pegs (budding ovaries) or leaves.

This chain is Conglutin, found in Arachis hypogaea (Peanut).